Reading from the N-terminus, the 27-residue chain is Carcinustatin-20 (27 aa).

Leu-27 carries the leucine amide modification.

It belongs to the allatostatin family.

The protein resides in the secreted. Its function is as follows. May act as a neurotransmitter or neuromodulator. This chain is Carcinustatin-20, found in Carcinus maenas (Common shore crab).